A 50-amino-acid chain; its full sequence is Large ribosomal subunit protein bL32 (50 aa).

Basic residues predominate over residues M1–K26. Residues M1 to N50 are disordered.

It belongs to the bacterial ribosomal protein bL32 family.

This chain is Large ribosomal subunit protein bL32, found in Aliarcobacter butzleri (strain RM4018) (Arcobacter butzleri).